Here is a 122-residue protein sequence, read N- to C-terminus: Large ribosomal subunit protein uL18 (122 aa).

Residues 1–24 (MSTLSRKQQTQKRHRRLRRHLSGT) form a disordered region. Over residues 9-21 (QTQKRHRRLRRHL) the composition is skewed to basic residues.

The protein belongs to the universal ribosomal protein uL18 family. Part of the 50S ribosomal subunit; part of the 5S rRNA/L5/L18/L25 subcomplex. Contacts the 5S and 23S rRNAs.

This is one of the proteins that bind and probably mediate the attachment of the 5S RNA into the large ribosomal subunit, where it forms part of the central protuberance. The sequence is that of Large ribosomal subunit protein uL18 from Synechococcus sp. (strain WH7803).